A 400-amino-acid chain; its full sequence is Involucrin (400 aa).

3 disordered regions span residues Met1–Gln196, Lys273–Leu312, and Lys333–Val381. Low complexity-rich tracts occupy residues Gln78 to Gln159, Glu169 to Glu186, and Glu279 to Gln292. A compositionally biased stretch (basic and acidic residues) spans Lys333–Gln344. Over residues Leu346–Gln358 the composition is skewed to low complexity.

It belongs to the involucrin family. In terms of assembly, directly or indirectly cross-linked to cornifelin (CNFN). Post-translationally, substrate of transglutaminase. Specific glutamines or lysines are cross-linked to keratins, desmoplakin and to inter involucrin molecules. In terms of tissue distribution, keratinocytes of epidermis and other stratified squamous epithelia.

It localises to the cytoplasm. Its function is as follows. Part of the insoluble cornified cell envelope (CE) of stratified squamous epithelia. The polypeptide is Involucrin (IVL) (Tupaia glis (Common tree shrew)).